The following is an 84-amino-acid chain: Small ribosomal subunit protein eS27 (84 aa).

Over residues 1 to 16 (MPLAKDPLHPSPEEEK) the composition is skewed to basic and acidic residues. The segment at 1-25 (MPLAKDPLHPSPEEEKRKHKKKRLV) is disordered. Phosphoserine is present on serine 11. The C4-type zinc-finger motif lies at 38–60 (PGCYKITTVFSHAQTVVLCVGCS).

This sequence belongs to the eukaryotic ribosomal protein eS27 family. Component of the small ribosomal subunit. Part of the small subunit (SSU) processome, composed of more than 70 proteins and the RNA chaperone small nucleolar RNA (snoRNA) U3. Zn(2+) serves as cofactor.

It is found in the cytoplasm. The protein localises to the nucleus. It localises to the nucleolus. Component of the small ribosomal subunit. The ribosome is a large ribonucleoprotein complex responsible for the synthesis of proteins in the cell. Required for proper rRNA processing and maturation of 18S rRNAs. Part of the small subunit (SSU) processome, first precursor of the small eukaryotic ribosomal subunit. During the assembly of the SSU processome in the nucleolus, many ribosome biogenesis factors, an RNA chaperone and ribosomal proteins associate with the nascent pre-rRNA and work in concert to generate RNA folding, modifications, rearrangements and cleavage as well as targeted degradation of pre-ribosomal RNA by the RNA exosome. In Pongo abelii (Sumatran orangutan), this protein is Small ribosomal subunit protein eS27 (RPS27).